The following is a 79-amino-acid chain: Virulence protein MsgA (79 aa).

This sequence belongs to the DinI family.

Affects survival in macrophages. The protein is Virulence protein MsgA (msgA) of Salmonella typhi.